A 218-amino-acid polypeptide reads, in one-letter code: Putative glutamine transport system permease protein GlnP (218 aa).

One can recognise an ABC transmembrane type-1 domain in the interval 19 to 208 (TLVTLKYSVI…ILVMLISFIA (190 aa)). Transmembrane regions (helical) follow at residues 25-45 (YSVIAVIFGLVIGMLLAICKV), 57-79 (FYTSIFRGTPLLIQLSIIYFASP), 86-108 (FSVFMAGAISFSLNSGAYVSEVI), and 187-207 (FFPMFIAACCYYILVMLISFI).

Belongs to the binding-protein-dependent transport system permease family. HisMQ subfamily.

It is found in the cell inner membrane. In terms of biological role, part of the binding-protein-dependent transport system for glutamine; probably responsible for the translocation of the substrate across the membrane. The chain is Putative glutamine transport system permease protein GlnP (glnP) from Rickettsia felis (strain ATCC VR-1525 / URRWXCal2) (Rickettsia azadi).